We begin with the raw amino-acid sequence, 407 residues long: Proline-rich P65 protein (407 aa).

The tract at residues 1–50 (MDINKPGWNQSDQQATAYDPNQQQYYGDGSTYYDPDQAVDPNQAYYPDPN) is disordered. A compositionally biased stretch (polar residues) spans 7 to 25 (GWNQSDQQATAYDPNQQQY). 12 consecutive repeat copies span residues 40–45 (DPNQAY), 75–80 (DPNQAY), 83–87 (DPNAY), 89–93 (DPNAY), 95–99 (DPNAY), 101–105 (DPNAY), 107–111 (DPNAY), 119–123 (DPNAY), 140–145 (DPNQAY), 150–154 (DPNAY), 156–160 (DPNAY), and 170–174 (DHNAY). A 12 X 5 AA repeats of D-P-N-Q-A-Y region spans residues 40–174 (DPNQAYYPDP…YVTSTDHNAY (135 aa)).

Post-translationally, the N-terminus is blocked.

The protein localises to the cell membrane. This is Proline-rich P65 protein (p65) from Mycoplasmoides pneumoniae (strain ATCC 15531 / DSM 23978 / CIP 103766 / NBRC 14401 / NCTC 10119 / FH) (Mycoplasma pneumoniae).